The following is a 902-amino-acid chain: Mitochondrial aspartate-glutamate transporter AGC1 (902 aa).

3 Solcar repeats span residues 528–614 (FDSL…MRNR), 622–710 (LSLF…LKKD), and 725–813 (LKTW…FKGF). Transmembrane regions (helical) follow at residues 534–554 (FSLG…IDFI), 591–611 (GPQL…NDFM), 622–642 (LSLF…VIFT), 681–702 (GLYN…IYFP), 731–751 (LTAG…FDVI), and 786–806 (FKGG…TLAA).

It belongs to the mitochondrial carrier (TC 2.A.29) family.

It is found in the mitochondrion inner membrane. Calcium-dependent mitochondrial aspartate and glutamate carrier. Transport of glutamate in mitochondria is required for mitochondrial transamination reactions and ornithine synthesis. Plays also a role in malate-aspartate NADH shuttle, which is critical for growth on acetate and fatty acids. In Saccharomyces cerevisiae (strain ATCC 204508 / S288c) (Baker's yeast), this protein is Mitochondrial aspartate-glutamate transporter AGC1 (AGC1).